A 380-amino-acid polypeptide reads, in one-letter code: Cytochrome b (380 aa).

The next 4 membrane-spanning stretches (helical) occupy residues 34–54 (FGSLLAVCLATQILTGLLLAM), 78–99 (WLIRNLHANGASFFFICIFLHI), 114–134 (WNTGVILLLTLMATAFVGYVL), and 179–199 (FFALHFLLPFVIAGITIIHLT). Residues H84 and H98 each coordinate heme b. The heme b site is built by H183 and H197. Position 202 (H202) interacts with a ubiquinone. The next 4 helical transmembrane spans lie at 227–247 (LKDILGLALMFIPFLALALFS), 289–309 (LGGVLALAASVLILLLIPFLH), 321–341 (LSQILFWLLVANLLVLTWIGS), and 348–368 (FIIIGQVASFSYFNILLILFP).

Belongs to the cytochrome b family. As to quaternary structure, the cytochrome bc1 complex contains 11 subunits: 3 respiratory subunits (MT-CYB, CYC1 and UQCRFS1), 2 core proteins (UQCRC1 and UQCRC2) and 6 low-molecular weight proteins (UQCRH/QCR6, UQCRB/QCR7, UQCRQ/QCR8, UQCR10/QCR9, UQCR11/QCR10 and a cleavage product of UQCRFS1). This cytochrome bc1 complex then forms a dimer. Heme b is required as a cofactor.

The protein localises to the mitochondrion inner membrane. In terms of biological role, component of the ubiquinol-cytochrome c reductase complex (complex III or cytochrome b-c1 complex) that is part of the mitochondrial respiratory chain. The b-c1 complex mediates electron transfer from ubiquinol to cytochrome c. Contributes to the generation of a proton gradient across the mitochondrial membrane that is then used for ATP synthesis. This is Cytochrome b (MT-CYB) from Polyplectron bicalcaratum (Grey peacock-pheasant).